The chain runs to 674 residues: Sodium/myo-inositol cotransporter 2 (674 aa).

Topologically, residues 1–25 (MESSASSPPLTQSDPLEAFPRRTLE) are extracellular. The chain crosses the membrane as a helical span at residues 26-46 (AGDIAVLVLYFLFVLAVGLWS). Over 47–56 (TVKTKRDTVK) the chain is Cytoplasmic. The helical transmembrane segment at 57–77 (GYFLAGGNMLWWPVGASLFAS) threads the bilayer. Residues 78–102 (NVGSGHFVGLAGSGAAAGLSVTAYE) are Extracellular-facing. A helical transmembrane segment spans residues 103–123 (LNGLFFVLMLSWIFLPIYITG). Over 124-140 (QVTTMPEYLRKRFGGNR) the chain is Cytoplasmic. Residues 141–161 (IPIILAVLYLFIYIFTKISVD) form a helical membrane-spanning segment. Residues 162–180 (MYAGAIFIQQSLHVNLYLA) lie on the Extracellular side of the membrane. A helical membrane pass occupies residues 181–201 (IVGLLAVTALYTIAGGLAAVI). Residues 202–208 (YTDALQT) lie on the Cytoplasmic side of the membrane. The chain crosses the membrane as a helical span at residues 209–229 (LIMLIGALILMGYSFAAVGGL). The Extracellular portion of the chain corresponds to 230-272 (EGLEEKYFLAMASNRSGNSSCGLPREDAFHIFRDPVTSDLPWP). Residues 273 to 293 (GILFGMSIPSLWYWCTDQVIV) traverse the membrane as a helical segment. The Cytoplasmic portion of the chain corresponds to 294–308 (QRTLAAKNLSHAKGG). A helical membrane pass occupies residues 309 to 329 (SLMAAYLKVLPLFIMVFPGMV). Residues 330-374 (SRVLFPDEVACADPEICRKVCSNPAGCSDIAYPKLVLELLPTGLR) lie on the Extracellular side of the membrane. The helical transmembrane segment at 375 to 397 (GLMMAVMVAALTSSLTSIFNSAS) threads the bilayer. Residues 398–418 (TIFTMDLWNHLRPRASEKELM) are Cytoplasmic-facing. The chain crosses the membrane as a helical span at residues 419–439 (IVGRVFVLLLVLVSILWIPVV). At 440-446 (QASQGGQ) the chain is on the extracellular side. The chain crosses the membrane as a helical span at residues 447 to 467 (LFIYIQSISSYLQPPVAVVFI). The Cytoplasmic segment spans residues 468–479 (MGCFWKRANEKG). Residues 480–500 (AFFGLVLGLLLGLVRLILDFI) traverse the membrane as a helical segment. Over 501–521 (YVQPRCDQLDERPAVVKDVHY) the chain is Extracellular. The helical transmembrane segment at 522 to 542 (LYFSMILSSVTLITVCAVSWF) threads the bilayer. At 543–653 (TEPPSKEMVS…SLEENPLVKT (111 aa)) the chain is on the cytoplasmic side. The interval 567 to 589 (EQVPSATPPPLTLSQNGTPEASG) is disordered. The segment covering 578–589 (TLSQNGTPEASG) has biased composition (polar residues). Residues 654 to 674 (LLDLNLIICISCAIFLWGYFA) form a helical membrane-spanning segment.

The protein belongs to the sodium:solute symporter (SSF) (TC 2.A.21) family.

Its subcellular location is the membrane. It localises to the apical cell membrane. The catalysed reaction is myo-inositol(out) + 2 Na(+)(out) = myo-inositol(in) + 2 Na(+)(in). It catalyses the reaction 1D-chiro-inositol(out) + 2 Na(+)(out) = 1D-chiro-inositol(in) + 2 Na(+)(in). The enzyme catalyses D-glucose(out) + 2 Na(+)(out) = D-glucose(in) + 2 Na(+)(in). It carries out the reaction D-xylose(out) + 2 Na(+)(out) = D-xylose(in) + 2 Na(+)(in). With respect to regulation, MI transport activity inhibited by D-chiro-inositol (DCI), phlorizin (Pz) and sodium (Na(+)). Insulin increases D-chiro-inositol uptake. Functionally, involved in the sodium-dependent cotransport of myo-inositol (MI) with a Na(+):MI stoichiometry of 2:1. Exclusively responsible for apical MI transport and absorption in intestine. Can also transport D-chiro-inositol (DCI) but not L-fucose. Exhibits stereospecific cotransport of both D-glucose and D-xylose. May induce apoptosis through the TNF-alpha, PDCD1 pathway. May play a role in the regulation of MI concentration in serum, involving reabsorption in at least the proximal tubule of the kidney. This chain is Sodium/myo-inositol cotransporter 2, found in Bos taurus (Bovine).